Here is a 30-residue protein sequence, read N- to C-terminus: Conopeptide Vi002 (30 aa).

Expressed by the venom gland.

The protein resides in the secreted. This chain is Conopeptide Vi002, found in Conus virgo (Virgin cone).